Consider the following 66-residue polypeptide: Large ribosomal subunit protein bL33c (66 aa).

This sequence belongs to the bacterial ribosomal protein bL33 family.

It is found in the plastid. Its subcellular location is the chloroplast. This is Large ribosomal subunit protein bL33c from Barbarea verna (Land cress).